The following is a 218-amino-acid chain: UPF0319 protein swp_2242 (218 aa).

Residues 1–21 (MRLSQSVLTALLICVNSAAFA) form the signal peptide.

Belongs to the UPF0319 family.

This chain is UPF0319 protein swp_2242, found in Shewanella piezotolerans (strain WP3 / JCM 13877).